The following is a 341-amino-acid chain: Dye-decolorizing peroxidase (341 aa).

The active-site Proton acceptor is the Asp148. His221 contacts heme. A targeting peptide region spans residues 304–341 (FLDDPPDAPTRLVPEATFTAPISDGSLGIGSLKRSAQQ).

Belongs to the DyP-type peroxidase family. In terms of assembly, homohexamer. The cofactor is heme b.

The protein resides in the encapsulin nanocompartment. Cargo protein of a type 1 encapsulin nanocompartment. Has both general peroxidase activity and dye-decolorizing activity. Can catalyze the oxidation of both protoporphyrinogen IX and coproporphyrinogen III to their corresponding porphyrins. Also efficiently decolorizes the dyes alizarin red and Cibacron blue F3GA. This cargo-loaded encapsulin nanocompartment is probably involved in protection against oxidative damage. This is Dye-decolorizing peroxidase from Rhodococcus erythropolis (strain PR4 / NBRC 100887).